A 194-amino-acid polypeptide reads, in one-letter code: Troponin I 4 (194 aa).

Residues Met1–Glu27 are disordered. A compositionally biased stretch (basic and acidic residues) spans Asp7–Glu27.

It belongs to the troponin I family. In terms of tissue distribution, expression is detected only in pharyngeal muscle cells from embryos to adults.

Functionally, troponin I is the inhibitory subunit of troponin, the thin filament regulatory complex which confers calcium-sensitivity to muscle actomyosin ATPase activity. This chain is Troponin I 4 (tni-4), found in Caenorhabditis elegans.